Reading from the N-terminus, the 214-residue chain is Adenylate kinase (214 aa).

10–15 lines the ATP pocket; the sequence is GAGKGT. The interval 30-59 is NMP; it reads STGDMLRAAIKAGTELGKQAKSVIDAGQLV. AMP is bound by residues Thr31, Arg36, 57 to 59, 85 to 88, and Gln92; these read QLV and GFPR. The interval 122–159 is LID; it reads GRRAHLPSGRTYHNVYNPPKEEGKDDITGEELVVRDDD. Residues Arg123 and 132–133 each bind ATP; that span reads TY. The AMP site is built by Arg156 and Arg167. An ATP-binding site is contributed by Lys200.

It belongs to the adenylate kinase family. In terms of assembly, monomer.

It is found in the cytoplasm. It catalyses the reaction AMP + ATP = 2 ADP. The protein operates within purine metabolism; AMP biosynthesis via salvage pathway; AMP from ADP: step 1/1. Catalyzes the reversible transfer of the terminal phosphate group between ATP and AMP. Plays an important role in cellular energy homeostasis and in adenine nucleotide metabolism. The chain is Adenylate kinase from Vibrio atlanticus (strain LGP32) (Vibrio splendidus (strain Mel32)).